Consider the following 399-residue polypeptide: Phosphoglycerate kinase (399 aa).

Substrate-binding positions include 21–23 (DFN), Arg36, 59–62 (HLGR), Arg120, and Arg158. ATP contacts are provided by residues Lys209, Gly297, Glu328, and 355–358 (GGDS).

It belongs to the phosphoglycerate kinase family. In terms of assembly, monomer.

It localises to the cytoplasm. The catalysed reaction is (2R)-3-phosphoglycerate + ATP = (2R)-3-phospho-glyceroyl phosphate + ADP. The protein operates within carbohydrate degradation; glycolysis; pyruvate from D-glyceraldehyde 3-phosphate: step 2/5. The chain is Phosphoglycerate kinase from Streptococcus thermophilus (strain ATCC BAA-250 / LMG 18311).